The sequence spans 119 residues: Protein TusC (119 aa).

This sequence belongs to the DsrF/TusC family. In terms of assembly, heterohexamer, formed by a dimer of trimers. The hexameric TusBCD complex contains 2 copies each of TusB, TusC and TusD. The TusBCD complex interacts with TusE.

The protein localises to the cytoplasm. In terms of biological role, part of a sulfur-relay system required for 2-thiolation of 5-methylaminomethyl-2-thiouridine (mnm(5)s(2)U) at tRNA wobble positions. The protein is Protein TusC of Sodalis glossinidius (strain morsitans).